We begin with the raw amino-acid sequence, 647 residues long: Threonine--tRNA ligase (647 aa).

The TGS domain maps to 1-60 (MQVTIEDQSLEAAAGEACGQVLSRAVSGKRLKNAVACLVDGQPRDLAFPLPEDAHELALV). The segment at 242-533 (DHRKLGAQLD…LIEHTAGALP (292 aa)) is catalytic. Zn(2+) is bound by residues Cys334, His385, and His510.

Belongs to the class-II aminoacyl-tRNA synthetase family. As to quaternary structure, homodimer. Zn(2+) serves as cofactor.

It localises to the cytoplasm. It catalyses the reaction tRNA(Thr) + L-threonine + ATP = L-threonyl-tRNA(Thr) + AMP + diphosphate + H(+). In terms of biological role, catalyzes the attachment of threonine to tRNA(Thr) in a two-step reaction: L-threonine is first activated by ATP to form Thr-AMP and then transferred to the acceptor end of tRNA(Thr). Also edits incorrectly charged L-seryl-tRNA(Thr). This Solidesulfovibrio magneticus (strain ATCC 700980 / DSM 13731 / RS-1) (Desulfovibrio magneticus) protein is Threonine--tRNA ligase.